We begin with the raw amino-acid sequence, 372 residues long: Putative isochorismate synthase MenF (372 aa).

Catalysis depends on lysine 119, which acts as the Proton acceptor. Glutamate 175 functions as the Proton donor in the catalytic mechanism. Glutamate 219 and glutamate 356 together coordinate Mg(2+).

Belongs to the isochorismate synthase family. It depends on Mg(2+) as a cofactor.

The enzyme catalyses chorismate = isochorismate. It participates in quinol/quinone metabolism; 1,4-dihydroxy-2-naphthoate biosynthesis; 1,4-dihydroxy-2-naphthoate from chorismate: step 1/7. It functions in the pathway quinol/quinone metabolism; menaquinone biosynthesis. In terms of biological role, catalyzes the conversion of chorismate to isochorismate. This is Putative isochorismate synthase MenF (menF) from Mycobacterium tuberculosis (strain CDC 1551 / Oshkosh).